Here is a 78-residue protein sequence, read N- to C-terminus: Large ribosomal subunit protein bL28 (78 aa).

The tract at residues 1–21 (MSRVCQVTGKRPVSGNNRSHA) is disordered.

This sequence belongs to the bacterial ribosomal protein bL28 family.

The polypeptide is Large ribosomal subunit protein bL28 (Sodalis glossinidius (strain morsitans)).